A 199-amino-acid chain; its full sequence is Recombination protein RecR (199 aa).

Residues 58–73 form a C4-type zinc finger; sequence CLVCGNVTGSDICPIC. The region spanning 81-176 is the Toprim domain; the sequence is GEICVVTDVA…AVTGLAQGVP (96 aa).

This sequence belongs to the RecR family.

Its function is as follows. May play a role in DNA repair. It seems to be involved in an RecBC-independent recombinational process of DNA repair. It may act with RecF and RecO. This is Recombination protein RecR from Paracoccus denitrificans (strain Pd 1222).